We begin with the raw amino-acid sequence, 807 residues long: Maternal DNA replication licensing factor mcm3 (807 aa).

Residues 295-502 (IFEHLSKSLA…NDQEIADHVL (208 aa)) enclose the MCM domain. ATP is bound at residue 345 to 352 (GDPSVAKS). The Arginine finger signature appears at 477–480 (SRFD). The segment covering 664–673 (KTDKDLHDEN) has biased composition (basic and acidic residues). Residues 664–741 (KTDKDLHDEN…QDGKRSLSQN (78 aa)) form a disordered region. Polar residues predominate over residues 707-723 (FSEQDSSLNENLSQSLR). Basic and acidic residues predominate over residues 727–741 (KKAESQDGKRSLSQN).

Belongs to the MCM family. Component of the mcm2-7 complex (RLF-M). The complex forms a toroidal hexameric ring with the proposed subunit order mcm2-mcm6-mcm4-mcm7-mcm3-mcm5. The heterodimer of mmcm3/mcm5 interacts with mcm4, mmcm6, mcm7 and weakly with mcm2. Interacts with mcm7, though this interaction may not be direct, and remains in a complex with mcm7 throughout the cell cycle. Component of the CMG helicase complex, composed of the mcm2-7 complex, the GINS complex and cdc45.

Its subcellular location is the nucleus. It is found in the chromosome. It catalyses the reaction ATP + H2O = ADP + phosphate + H(+). Its function is as follows. Acts as a component of the mcm2-7 complex (mcm complex) which is the putative replicative helicase essential for 'once per cell cycle' DNA replication initiation and elongation in eukaryotic cells. The active ATPase sites in the mcm2-7 ring are formed through the interaction surfaces of two neighboring subunits such that a critical structure of a conserved arginine finger motif is provided in trans relative to the ATP-binding site of the Walker A box of the adjacent subunit. The six ATPase active sites, however, are likely to contribute differentially to the complex helicase activity. The existence of maternal and zygotic forms of mcm3 and mcm6 suggests that specific forms of mcm2-7 complexes may be used during different stages of development. This chain is Maternal DNA replication licensing factor mcm3 (mmcm3), found in Xenopus laevis (African clawed frog).